The primary structure comprises 351 residues: Cytosolic sulfotransferase 11 (351 aa).

98 to 103 lines the 3'-phosphoadenylyl sulfate pocket; it reads KGGTTW. Residue histidine 163 is the Proton acceptor of the active site. Residues arginine 184, serine 192, tyrosine 250, and 316-318 each bind 3'-phosphoadenylyl sulfate; that span reads RKG.

It belongs to the sulfotransferase 1 family.

The protein resides in the cytoplasm. In terms of biological role, sulfotransferase that utilizes 3'-phospho-5'-adenylyl sulfate (PAPS) as sulfonate donor. The sequence is that of Cytosolic sulfotransferase 11 (SOT11) from Arabidopsis thaliana (Mouse-ear cress).